Reading from the N-terminus, the 33-residue chain is Brevinin-2HSa (33 aa).

A disulfide bridge connects residues Cys27 and Cys33.

Expressed by the skin glands.

The protein resides in the secreted. Functionally, has antibacterial activity against the Gram-positive bacterium S.aureus ATCC 25923 (MIC=18 uM) and the Gram-negative bacterium E.coli ATCC 25726 (MIC=36 uM). The protein is Brevinin-2HSa of Odorrana hosii (Hose's rock frog).